Here is a 101-residue protein sequence, read N- to C-terminus: Toxin Tpa8 (101 aa).

A signal peptide spans Met-1–Val-20. The LCN-type CS-alpha/beta domain maps to Lys-24–Glu-98. 4 cysteine pairs are disulfide-bonded: Cys-44-Cys-70, Cys-56-Cys-75, Cys-60-Cys-77, and Cys-71-Cys-97.

Belongs to the long (4 C-C) scorpion toxin superfamily. Sodium channel inhibitor family. Beta subfamily. As to expression, expressed by the venom gland.

The protein localises to the secreted. Its function is as follows. Excitatory insect beta-toxins induce a spastic paralysis. They bind voltage-independently at site-4 of sodium channels (Nav) and shift the voltage of activation toward more negative potentials thereby affecting sodium channel activation and promoting spontaneous and repetitive firing. This Tityus pachyurus (Colombian scorpion) protein is Toxin Tpa8.